Consider the following 60-residue polypeptide: MAQLRVTQIKSKISEKQNQRDTLRSLGLRRIGAVVVREDNAQNRGYVNTVAHLVKVEEID.

It belongs to the universal ribosomal protein uL30 family. Part of the 50S ribosomal subunit.

The sequence is that of Large ribosomal subunit protein uL30 from Clavibacter michiganensis subsp. michiganensis (strain NCPPB 382).